The sequence spans 457 residues: Methanethiol oxidase (457 aa).

Belongs to the selenium-binding protein family.

Its subcellular location is the nucleus. The protein localises to the cytoplasm. It is found in the cytosol. The protein resides in the membrane. The enzyme catalyses methanethiol + O2 + H2O = hydrogen sulfide + formaldehyde + H2O2 + H(+). It participates in organosulfur degradation. Catalyzes the oxidation of methanethiol, an organosulfur compound known to be produced in substantial amounts by gut bacteria. Selenium-binding protein which may be involved in the sensing of reactive xenobiotics in the cytoplasm. May be involved in intra-Golgi protein transport. This chain is Methanethiol oxidase (selenbp1), found in Danio rerio (Zebrafish).